Consider the following 238-residue polypeptide: Uridylate kinase (238 aa).

ATP is bound at residue 12–15; it reads KLSG. Residue G54 coordinates UMP. 2 residues coordinate ATP: G55 and R59. UMP contacts are provided by residues D74 and 135 to 142; that span reads TGNPFFTT. Residues T162, Y168, and D171 each coordinate ATP.

This sequence belongs to the UMP kinase family. Homohexamer.

It is found in the cytoplasm. It catalyses the reaction UMP + ATP = UDP + ADP. The protein operates within pyrimidine metabolism; CTP biosynthesis via de novo pathway; UDP from UMP (UMPK route): step 1/1. Inhibited by UTP. Its function is as follows. Catalyzes the reversible phosphorylation of UMP to UDP. This Bordetella parapertussis (strain 12822 / ATCC BAA-587 / NCTC 13253) protein is Uridylate kinase.